The chain runs to 407 residues: Probable succinyl-diaminopimelate desuccinylase (407 aa).

H72 contributes to the Zn(2+) binding site. D74 is a catalytic residue. D105 provides a ligand contact to Zn(2+). The Proton acceptor role is filled by E139. Residues E140, E165, and H378 each coordinate Zn(2+).

It belongs to the peptidase M20A family. Requires Zn(2+) as cofactor. The cofactor is Co(2+).

It catalyses the reaction N-succinyl-(2S,6S)-2,6-diaminopimelate + H2O = (2S,6S)-2,6-diaminopimelate + succinate. The protein operates within amino-acid biosynthesis; L-lysine biosynthesis via DAP pathway; LL-2,6-diaminopimelate from (S)-tetrahydrodipicolinate (succinylase route): step 3/3. The sequence is that of Probable succinyl-diaminopimelate desuccinylase (dapE) from Staphylococcus aureus (strain MRSA252).